The following is a 189-amino-acid chain: Putative manganese efflux pump MntP (189 aa).

Transmembrane regions (helical) follow at residues 3–23 (PVSL…AAIG), 41–61 (IIFG…GQAA), 65–85 (VADW…LHMI), 106–128 (WILA…GLAF), 141–161 (GLAT…LGAV), and 168–188 (MVGG…HLSA).

Belongs to the MntP (TC 9.B.29) family.

It is found in the cell inner membrane. In terms of biological role, probably functions as a manganese efflux pump. This chain is Putative manganese efflux pump MntP, found in Pseudomonas aeruginosa (strain UCBPP-PA14).